The primary structure comprises 187 residues: Elongation factor P (187 aa).

The protein belongs to the elongation factor P family.

It localises to the cytoplasm. The protein operates within protein biosynthesis; polypeptide chain elongation. Involved in peptide bond synthesis. Stimulates efficient translation and peptide-bond synthesis on native or reconstituted 70S ribosomes in vitro. Probably functions indirectly by altering the affinity of the ribosome for aminoacyl-tRNA, thus increasing their reactivity as acceptors for peptidyl transferase. This Corynebacterium aurimucosum (strain ATCC 700975 / DSM 44827 / CIP 107346 / CN-1) (Corynebacterium nigricans) protein is Elongation factor P.